We begin with the raw amino-acid sequence, 327 residues long: tRNA N6-adenosine threonylcarbamoyltransferase (327 aa).

Histidine 107 and histidine 111 together coordinate Fe cation. Residues leucine 129 to glycine 133, aspartate 162, glycine 175, and asparagine 263 contribute to the substrate site. Aspartate 291 provides a ligand contact to Fe cation.

This sequence belongs to the KAE1 / TsaD family. It depends on Fe(2+) as a cofactor.

It is found in the cytoplasm. It catalyses the reaction L-threonylcarbamoyladenylate + adenosine(37) in tRNA = N(6)-L-threonylcarbamoyladenosine(37) in tRNA + AMP + H(+). In terms of biological role, required for the formation of a threonylcarbamoyl group on adenosine at position 37 (t(6)A37) in tRNAs that read codons beginning with adenine. Is involved in the transfer of the threonylcarbamoyl moiety of threonylcarbamoyl-AMP (TC-AMP) to the N6 group of A37, together with TsaE and TsaB. TsaD likely plays a direct catalytic role in this reaction. This chain is tRNA N6-adenosine threonylcarbamoyltransferase, found in Nautilia profundicola (strain ATCC BAA-1463 / DSM 18972 / AmH).